Reading from the N-terminus, the 609-residue chain is Threonine--tRNA ligase (609 aa).

An editing domain region spans residues 1-145; it reads MRLLLIHSDY…TIVPGAGAAV (145 aa). A catalytic region spans residues 194–485; sequence IHVDLMRSKE…TANQSVPQLP (292 aa). Residues cysteine 286, histidine 338, and histidine 458 each contribute to the Zn(2+) site.

The protein belongs to the class-II aminoacyl-tRNA synthetase family. As to quaternary structure, homodimer. The cofactor is Zn(2+).

It is found in the cytoplasm. It catalyses the reaction tRNA(Thr) + L-threonine + ATP = L-threonyl-tRNA(Thr) + AMP + diphosphate + H(+). Catalyzes the attachment of threonine to tRNA(Thr) in a two-step reaction: L-threonine is first activated by ATP to form Thr-AMP and then transferred to the acceptor end of tRNA(Thr). Also edits incorrectly charged L-seryl-tRNA(Thr). This is Threonine--tRNA ligase from Methanosphaerula palustris (strain ATCC BAA-1556 / DSM 19958 / E1-9c).